A 38-amino-acid polypeptide reads, in one-letter code: Phospholipase A2 1 (38 aa).

Residues Y28, G30, and G32 each contribute to the Ca(2+) site.

This sequence belongs to the phospholipase A2 family. Group I subfamily. It depends on Ca(2+) as a cofactor. Expressed by the venom gland.

It localises to the secreted. The catalysed reaction is a 1,2-diacyl-sn-glycero-3-phosphocholine + H2O = a 1-acyl-sn-glycero-3-phosphocholine + a fatty acid + H(+). In terms of biological role, snake venom phospholipase A2 (PLA2) that inhibits neuromuscular transmission by blocking acetylcholine release from the nerve termini. PLA2 catalyzes the calcium-dependent hydrolysis of the 2-acyl groups in 3-sn-phosphoglycerides. This is Phospholipase A2 1 from Calliophis bivirgatus (Blue Malaysian coral snake).